We begin with the raw amino-acid sequence, 1202 residues long: Protein jagged-2 (1202 aa).

Residues 1–1037 lie on the Extracellular side of the membrane; it reads GACCDGDGRT…ETVVMGGSST (1037 aa). An N-linked (GlcNAc...) asparagine glycan is attached at Asn107. The 45-residue stretch at 150-194 folds into the DSL domain; that stretch reads VRCDENYYSATCNKFCRPRNDFFGHYTCDQYGNKACMDGWMGKEC. Cystine bridges form between Cys152–Cys161, Cys165–Cys177, Cys185–Cys194, Cys199–Cys210, Cys203–Cys216, Cys218–Cys227, Cys230–Cys241, Cys236–Cys247, Cys249–Cys258, Cys265–Cys277, Cys271–Cys287, Cys289–Cys298, Cys305–Cys316, Cys310–Cys325, Cys327–Cys336, Cys343–Cys354, Cys348–Cys363, Cys365–Cys374, Cys381–Cys392, Cys386–Cys401, Cys403–Cys412, Cys419–Cys429, Cys423–Cys438, Cys440–Cys449, Cys456–Cys467, Cys461–Cys476, Cys478–Cys487, Cys495–Cys506, Cys500–Cys515, Cys517–Cys526, Cys544–Cys567, Cys561–Cys577, Cys579–Cys588, Cys595–Cys606, Cys600–Cys615, Cys617–Cys626, Cys633–Cys644, Cys638–Cys653, Cys655–Cys664, Cys671–Cys682, Cys676–Cys691, and Cys693–Cys702. An EGF-like 1 domain is found at 195-228; sequence KEAVCKQGCNLLHGGCTVPGECRCSYGWQGKFCD. Residues 229-259 form the EGF-like 2; atypical domain; the sequence is ECVPYPGCVHGSCVEPWHCDCETNWGGLLCD. EGF-like domains follow at residues 261-299 and 301-337; these read DLNYCGSHHPCVNGGTCINAEPDQYLCACPDGYLGKNCE and AEHACASNPCANGGSCHEVLSGFECHCPSGWSGPTCA. The EGF-like 5; calcium-binding domain occupies 339–375; that stretch reads DIDECASNPCAAGGTCVDQVDGFECICPEQWVGATCQ. In terms of domain architecture, EGF-like 6; calcium-binding spans 377–413; it reads DANECEGKPCLNAFSCKNLIGGYYCDCLPGWKGANCH. An EGF-like 7; calcium-binding domain is found at 415–450; that stretch reads NINDCHGQCQHGGTCKDLVNGYQCVCPRGFGGRHCE. 2 consecutive EGF-like domains span residues 452 to 488 and 490 to 527; these read EYYKCASSPCRRGGICEDLVDGFRCHCPRGLSGPLCE and DVDLWCEPNPCLNGARCYNLEDDYYCACPEDFGGKNCS. Residue Asn525 is glycosylated (N-linked (GlcNAc...) asparagine). In terms of domain architecture, EGF-like 10; atypical spans 529–589; the sequence is PRETCPGGAC…DSGFTGTYCH (61 aa). Asn574 carries an N-linked (GlcNAc...) asparagine glycan. The region spanning 591-627 is the EGF-like 11; calcium-binding domain; sequence NIDDCMGQPCRNGGTCIDEVDSFACFCPSGWEGELCD. The EGF-like 12; calcium-binding domain maps to 629 to 665; sequence NPNDCLPDPCHSRGRCYDLVNDFYCVCDDGWKDKTCH. EGF-like domains lie at 667–703 and 706–742; these read REFQCDAYTCSNGGTCYDSGDTFRCACPPGWKGSTCT and KNSSCVPNPCVNGGTCVGSGDSFSCICRDGWEGRTCT. Asn707 carries an N-linked (GlcNAc...) asparagine glycan. 9 disulfide bridges follow: Cys710-Cys721, Cys715-Cys730, Cys732-Cys741, Cys748-Cys759, Cys753-Cys768, Cys770-Cys779, Cys786-Cys797, Cys791-Cys806, and Cys808-Cys817. The EGF-like 15; calcium-binding domain occupies 744–780; that stretch reads NTNDCNPLPCYNGGICVDGVNWFRCECAPGFAGPDCR. Positions 782-818 constitute an EGF-like 16; calcium-binding domain; that stretch reads NIDECQSSPCAYGATCVDEINGYRCSCPPGRSGPRCQ. Asn1015 carries N-linked (GlcNAc...) asparagine glycosylation. Residues 1038–1058 form a helical membrane-spanning segment; that stretch reads GLLVPVLCSVFSVLWLACMVI. The Cytoplasmic segment spans residues 1059–1202; it reads CVWWTRKRRK…TKDVRCAGRE (144 aa). Basic and acidic residues-rich tracts occupy residues 1070–1080, 1147–1159, and 1185–1202; these read RERSRLPRDES, LSRGDGRLSRSRE, and VDNRAVRSTKDVRCAGRE. The segment at 1070-1202 is disordered; that stretch reads RERSRLPRDE…TKDVRCAGRE (133 aa). Ser1080 carries the post-translational modification Phosphoserine.

The protein resides in the membrane. Its function is as follows. Putative Notch ligand involved in the mediation of Notch signaling. May have a role in neurogenesis in the peripheral nervous system, limb development and in the adult brain. The sequence is that of Protein jagged-2 (Jag2) from Rattus norvegicus (Rat).